We begin with the raw amino-acid sequence, 151 residues long: 3-hydroxyacyl-thioester dehydratase Z (151 aa).

Positions Ala11–Val131 constitute a MaoC-like domain. Substrate-binding positions include Ile60–Gly63, Ala86–Tyr89, Pro97–Pro99, Gln124, and Arg148.

Belongs to the enoyl-CoA hydratase/isomerase family. As to quaternary structure, homodimer.

The enzyme catalyses a (3R)-3-hydroxyacyl-CoA = a (2E)-enoyl-CoA + H2O. Functionally, shows trans-enoyl-CoA hydratase/3-hydroxyacyl-CoA dehydratase activity. This is 3-hydroxyacyl-thioester dehydratase Z from Mycobacterium bovis (strain ATCC BAA-935 / AF2122/97).